The sequence spans 632 residues: tRNA endonuclease VMS1 (632 aa).

Residues 72–96 (MRCSVCQMSFDSRNEQKAHYQTDYH) form a C2H2-type zinc finger. Positions 123–155 (HGIKSEDENSGGEQTSSDHEESEEASDRDPDLQ) are disordered. One can recognise a VLRF1 domain in the interval 232–392 (PMAISALFMV…KKAWCELSYL (161 aa)). Gln-295 is a catalytic residue. ANK repeat units lie at residues 470–500 (LTPT…DPTI) and 504–530 (LGRT…NLGE). Coiled coils occupy residues 544-582 (LSRE…QRFA) and 608-632 (TDEQ…KKKY). Basic and acidic residues predominate over residues 578-589 (KQRFAKDAERGP). The interval 578–632 (KQRFAKDAERGPGKKLTNIPSIQQQNLNSLTDEQRRRLMREQRARAAEERMKKKY) is disordered. Residues 595-608 (NIPSIQQQNLNSLT) show a composition bias toward polar residues. The span at 609–632 (DEQRRRLMREQRARAAEERMKKKY) shows a compositional bias: basic and acidic residues.

This sequence belongs to the ANKZF1/VMS1 family. As to quaternary structure, associates with 60S ribosomal subunit. Interacts with CDC48. Interacts with NPL4.

It is found in the cytoplasm. Its subcellular location is the mitochondrion. The protein resides in the endoplasmic reticulum membrane. Endonuclease that cleaves polypeptidyl-tRNAs downstream of the ribosome-associated quality control (RQC) pathway to release incompletely synthesized polypeptides for degradation. The RQC pathway disassembles aberrantly stalled translation complexes to recycle or degrade the constituent parts. VMS1 acts downstream disassembly of stalled ribosomes and specifically cleaves off the terminal 3'-CCA nucleotides universal to all tRNAs from polypeptidyl-tRNAs, releasing (1) ubiquitinated polypeptides from 60S ribosomal subunit for degradation by the ERAD pathway and (2) cleaved tRNAs for recycling. Component of an evolutionarily conserved system for ubiquitin-mediated mitochondria-associated protein degradation (MAD), which is necessary to maintain mitochondrial, cellular, and organismal viability. This chain is tRNA endonuclease VMS1, found in Saccharomyces cerevisiae (strain ATCC 204508 / S288c) (Baker's yeast).